The following is a 281-amino-acid chain: Merozoite surface protein 2 (281 aa).

An N-terminal signal peptide occupies residues 1-20 (MKVIKTLSIINFFIFVTFNI). N-linked (GlcNAc...) asparagine glycosylation is found at Asn-22 and Asn-36. Residues 42–242 (SMEESNPPTG…DSQKECTDGN (201 aa)) form a disordered region. The polymorphic region stretch occupies residues 44-207 (EESNPPTGAS…EQTESPELQS (164 aa)). Tandem repeats lie at residues 51-58 (GASGRAGA), 59-66 (GASGRAGA), and 67-74 (GASGRAGA). The segment at 51 to 74 (GASGRAGAGASGRAGAGASGRAGA) is 3 X 8 AA tandem repeats of G-A-S-G-R-A-G-A. Residues 54–76 (GRAGAGASGRAGAGASGRAGAGA) show a composition bias toward gly residues. Positions 77 to 133 (GAVASAGSGDGAVASAGNGANPGADAKRSTSTPATTTTTTTTNDAEASTSTSSENPN) are enriched in low complexity. Polar residues-rich tracts occupy residues 150–174 (NKAN…NVPP) and 181–209 (KSPT…QSAP). A glycan (N-linked (GlcNAc...) asparagine) is linked at Asn-158. Residue Asn-230 is glycosylated (N-linked (GlcNAc...) asparagine). Cys-238 and Cys-246 form a disulfide bridge. N-linked (GlcNAc...) asparagine glycans are attached at residues Asn-254 and Asn-255. The GPI-anchor amidated asparagine moiety is linked to residue Asn-255. The propeptide at 256-281 (SSNIASINKFVVLISATLVLSFAIFI) is removed in mature form.

It localises to the cell membrane. Its function is as follows. May play a role in the merozoite attachment to the erythrocyte. This chain is Merozoite surface protein 2, found in Plasmodium falciparum (isolate thtn / Thailand).